The following is a 543-amino-acid chain: T-complex protein 1 subunit gamma (543 aa).

Belongs to the TCP-1 chaperonin family.

The protein localises to the cytoplasm. Molecular chaperone; assists the folding of proteins upon ATP hydrolysis. Known to play a role, in vitro, in the folding of actin and tubulin. Plays a role in microtubule polymerization. The chain is T-complex protein 1 subunit gamma from Caenorhabditis elegans.